Consider the following 384-residue polypeptide: Branched-chain-amino-acid aminotransferase 1, mitochondrial (384 aa).

A mitochondrion-targeting transit peptide spans 1–18 (MALRRCLPQYSTTSSYLS). Lys-231 carries the post-translational modification N6-(pyridoxal phosphate)lysine.

Belongs to the class-IV pyridoxal-phosphate-dependent aminotransferase family. Requires pyridoxal 5'-phosphate as cofactor.

The protein localises to the mitochondrion. It catalyses the reaction L-leucine + 2-oxoglutarate = 4-methyl-2-oxopentanoate + L-glutamate. It carries out the reaction L-isoleucine + 2-oxoglutarate = (S)-3-methyl-2-oxopentanoate + L-glutamate. The enzyme catalyses L-valine + 2-oxoglutarate = 3-methyl-2-oxobutanoate + L-glutamate. It participates in amino-acid degradation; L-leucine degradation; 4-methyl-2-oxopentanoate from L-leucine (aminotransferase route): step 1/1. The protein operates within amino-acid degradation; L-valine degradation. Functionally, converts 2-oxo acids to branched-chain amino acids. Acts on leucine, isoleucine and valine. The polypeptide is Branched-chain-amino-acid aminotransferase 1, mitochondrial (BCAT1) (Arabidopsis thaliana (Mouse-ear cress)).